Here is a 487-residue protein sequence, read N- to C-terminus: GTPase Der (487 aa).

2 EngA-type G domains span residues 3-166 (PVVA…AEAM) and 199-372 (IKLA…DSAT). Residues 9–16 (GRPNVGKS), 56–60 (DTGGI), 118–121 (NKID), 205–212 (GKPNVGKS), 252–256 (DTAGV), and 317–320 (NKWD) contribute to the GTP site. Positions 373-457 (RRVSTSMLTR…PIQLRFQEGD (85 aa)) constitute a KH-like domain.

Belongs to the TRAFAC class TrmE-Era-EngA-EngB-Septin-like GTPase superfamily. EngA (Der) GTPase family. Associates with the 50S ribosomal subunit.

Functionally, GTPase that plays an essential role in the late steps of ribosome biogenesis. The polypeptide is GTPase Der (Shewanella oneidensis (strain ATCC 700550 / JCM 31522 / CIP 106686 / LMG 19005 / NCIMB 14063 / MR-1)).